Here is a 1960-residue protein sequence, read N- to C-terminus: Transcription factor 20 (1960 aa).

The span at 1-18 (MQSFREQSSYHGNQQSYP) shows a compositional bias: polar residues. The segment at 1–287 (MQSFREQSSY…GSNAQAYGTQ (287 aa)) is disordered. The segment covering 42-60 (GGTGGSSGSSGSGSGGGRR) has biased composition (gly residues). An Omega-N-methylarginine modification is found at arginine 60. Over residues 61-75 (GAAAAAAAMASETSG) the composition is skewed to low complexity. Residues 122–131 (QGSSFGNQYG) are compositionally biased toward polar residues. Over residues 164–192 (SAQYQQQASSQQQQQQVQQLRQQLYQSHQ) the composition is skewed to low complexity. The segment covering 193–219 (PLPQATGQPASSSSHLQPMQRPSTLPS) has biased composition (polar residues). The span at 236-259 (QSSASSSSSSSFPSPQRFSQSGQS) shows a compositional bias: low complexity. 2 stretches are compositionally biased toward polar residues: residues 260–270 (YDGSYNVNAGS) and 277–287 (VGSNAQAYGTQ). Residue lysine 304 forms a Glycyl lysine isopeptide (Lys-Gly) (interchain with G-Cter in SUMO2) linkage. 2 disordered regions span residues 305 to 328 (IPQG…SQHV) and 360 to 392 (FHQN…LMQT). Composition is skewed to low complexity over residues 306–322 (PQGT…QQQQ) and 368–388 (SNPS…TPSP). Phosphoserine occurs at positions 419 and 430. The segment at 476 to 748 (SDALTPQKKT…HGERKGRNEK (273 aa)) is disordered. 2 stretches are compositionally biased toward polar residues: residues 497-508 (SCTNSEGSSQPE) and 537-547 (LSGQSTSSDTT). 4 positions are modified to phosphoserine: serine 538, serine 559, serine 574, and serine 583. Lysine 602 is subject to N6-acetyllysine. Positions 616–628 (RVEKPGGQDKGSQ) are enriched in basic and acidic residues. The residue at position 640 (serine 640) is a Phosphoserine. Residues 665–677 (GNKNGDNNSNHNG) are compositionally biased toward low complexity. Residues 693–702 (TSRTEPSKSP) show a composition bias toward polar residues. Residues lysine 710, lysine 733, lysine 748, lysine 823, lysine 832, and lysine 844 each participate in a glycyl lysine isopeptide (Lys-Gly) (interchain with G-Cter in SUMO2) cross-link. The span at 732–748 (EKGDFTGHGERKGRNEK) shows a compositional bias: basic and acidic residues. Position 871 is a phosphoserine (serine 871). Glycyl lysine isopeptide (Lys-Gly) (interchain with G-Cter in SUMO2) cross-links involve residues lysine 920 and lysine 922. The tract at residues 920–1037 (KLKSQSGQIK…GDPHHMNPHM (118 aa)) is disordered. Residue lysine 929 forms a Glycyl lysine isopeptide (Lys-Gly) (interchain with G-Cter in SUMO1); alternate linkage. Lysine 929 participates in a covalent cross-link: Glycyl lysine isopeptide (Lys-Gly) (interchain with G-Cter in SUMO2); alternate. Polar residues predominate over residues 936 to 945 (SKSQASFNNK). The segment covering 946–961 (KSGDHCHPPSIKHESY) has biased composition (basic and acidic residues). Residue lysine 957 forms a Glycyl lysine isopeptide (Lys-Gly) (interchain with G-Cter in SUMO2) linkage. Phosphoserine is present on residues serine 966 and serine 1005. Residue lysine 1015 forms a Glycyl lysine isopeptide (Lys-Gly) (interchain with G-Cter in SUMO2) linkage. Arginine 1024 bears the Omega-N-methylarginine mark. Serine 1053 carries the post-translational modification Phosphoserine. Glycyl lysine isopeptide (Lys-Gly) (interchain with G-Cter in SUMO2) cross-links involve residues lysine 1086, lysine 1098, lysine 1137, lysine 1173, lysine 1178, lysine 1183, lysine 1210, lysine 1231, lysine 1267, and lysine 1274. 3 disordered regions span residues 1110 to 1142 (AAAQ…DKDG), 1162 to 1285 (RCLM…GRLL), and 1303 to 1331 (SHSQ…CPAV). Basic and acidic residues predominate over residues 1130 to 1142 (DRVRSPLKNDKDG). Residues 1170–1191 (LPNKGMELKHGSQKLQESCWDL) form a leucine-zipper region. Residues 1254 to 1268 (RRRVRSFISPIPSKR) carry the Nuclear localization signal motif. Residues 1304-1318 (HSQDIKSIPKRDSSK) are compositionally biased toward basic and acidic residues. Serine 1305 is modified (phosphoserine). A Glycyl lysine isopeptide (Lys-Gly) (interchain with G-Cter in SUMO2) cross-link involves residue lysine 1309. Serine 1335 carries the post-translational modification Phosphoserine. Residue lysine 1338 forms a Glycyl lysine isopeptide (Lys-Gly) (interchain with G-Cter in SUMO2) linkage. The residue at position 1361 (serine 1361) is a Phosphoserine. Positions 1384 to 1607 (DILSLKSGPP…TKQAVPIVEP (224 aa)) are disordered. Residues lysine 1389, lysine 1409, lysine 1428, and lysine 1446 each participate in a glycyl lysine isopeptide (Lys-Gly) (interchain with G-Cter in SUMO2) cross-link. Positions 1424 to 1451 (LHVEKPLPRSSEEWRGSVDDKVKTETHA) are enriched in basic and acidic residues. Over residues 1464-1477 (MTSTTSQKPGSNQG) the composition is skewed to polar residues. A Glycyl lysine isopeptide (Lys-Gly) (interchain with G-Cter in SUMO2) cross-link involves residue lysine 1510. Phosphoserine is present on serine 1522. Lysine 1524 is covalently cross-linked (Glycyl lysine isopeptide (Lys-Gly) (interchain with G-Cter in SUMO2)). Positions 1537–1551 (GKKKGRPIGSVNKQK) form a DNA-binding region, a.T hook. The segment covering 1555–1566 (QPPPPPPQPPQI) has biased composition (pro residues). The Nuclear localization signal signature appears at 1576–1600 (KPKKQRQRRERRKPGAQPRKRKTKQ). Residues 1578–1599 (KKQRQRRERRKPGAQPRKRKTK) are compositionally biased toward basic residues. Lysine 1613 participates in a covalent cross-link: Glycyl lysine isopeptide (Lys-Gly) (interchain with G-Cter in SUMO2). Disordered stretches follow at residues 1660–1683 (LVRG…KALP) and 1732–1839 (TLPK…PELE). Phosphoserine is present on serine 1669. Residues threonine 1671, threonine 1762, and threonine 1764 each carry the phosphothreonine modification. Positions 1785–1792 (RFKRRHRS) match the Nuclear localization signal motif. The segment at 1829–1865 (PTTSEGGPELELQIPELPLDSNEFWVHEGCILWANGI) adopts a C2HC pre-PHD-type; degenerate zinc-finger fold. The segment at 1885–1933 (MKCSHCQEAGATLGCYNKGCSFRYHYPCAIDADCLLHEENFSVRCPKHK) adopts a PHD-type zinc-finger fold. Positions 1939–1960 (PLPPLQNKTAKGSLSTEQSERG) are disordered. Polar residues predominate over residues 1944–1960 (QNKTAKGSLSTEQSERG).

As to quaternary structure, homodimer. Interacts with RNF4 and JUN. Expressed in most tissues, except in ovary and prostate. Isoform 1 is exclusively expressed in brain, heart and testis, and this form predominates in liver and kidney. Isoform 2 predominates in lung.

The protein resides in the nucleus. Its function is as follows. Transcriptional activator that binds to the regulatory region of MMP3 and thereby controls stromelysin expression. It stimulates the activity of various transcriptional activators such as JUN, SP1, PAX6 and ETS1, suggesting a function as a coactivator. This Homo sapiens (Human) protein is Transcription factor 20 (TCF20).